The following is a 94-amino-acid chain: Acylphosphatase (94 aa).

The Acylphosphatase-like domain maps to Arg3–Tyr90. Residues Arg18 and Asn36 contribute to the active site.

This sequence belongs to the acylphosphatase family.

It catalyses the reaction an acyl phosphate + H2O = a carboxylate + phosphate + H(+). In Geobacillus kaustophilus (strain HTA426), this protein is Acylphosphatase (acyP).